Consider the following 426-residue polypeptide: Dihydropyrimidine dehydrogenase (NADP(+)), chloroplastic (426 aa).

The N-terminal 44 residues, 1-44 (MASMSFALNRFSGLSSKTTLSADFDPSSRRSFLPPTRVGLKISS), are a transit peptide targeting the chloroplast. Alanine 45 carries the N-acetylalanine modification. Substrate contacts are provided by residues asparagine 129 and 188–190 (NFS). Catalysis depends on cysteine 191, which acts as the Nucleophile. 256–257 (NT) serves as a coordination point for substrate. The segment at 395-414 (VEQRKAEKRGLKSDKDWTGD) is disordered.

The protein belongs to the dihydropyrimidine dehydrogenase family. Expressed in roots, leaves, stems, siliques and flowers. Highly expressed ion dry seeds.

The protein localises to the plastid. The protein resides in the chloroplast. It carries out the reaction 5,6-dihydrouracil + NADP(+) = uracil + NADPH + H(+). It participates in amino-acid biosynthesis; beta-alanine biosynthesis. Functionally, involved in pyrimidine base degradation. Catalyzes the reduction of uracil to 5,6-dihydrouracil (DHU) by using NADH as a specific cosubstrate and the reduction of thymine to 5,6-dihydrothymine (DHT). Involved in the recycling of nitrogen from nucleobases to general nitrogen metabolism. The sequence is that of Dihydropyrimidine dehydrogenase (NADP(+)), chloroplastic from Arabidopsis thaliana (Mouse-ear cress).